A 468-amino-acid polypeptide reads, in one-letter code: Putrescine aminotransferase (468 aa).

Residues 150–151 (GT) and Gln274 each bind pyridoxal 5'-phosphate. Residue Lys300 is modified to N6-(pyridoxal phosphate)lysine. A pyridoxal 5'-phosphate-binding site is contributed by Thr332.

This sequence belongs to the class-III pyridoxal-phosphate-dependent aminotransferase family. Putrescine aminotransferase subfamily. Pyridoxal 5'-phosphate is required as a cofactor.

The enzyme catalyses an alkane-alpha,omega-diamine + 2-oxoglutarate = an omega-aminoaldehyde + L-glutamate. It carries out the reaction putrescine + 2-oxoglutarate = 1-pyrroline + L-glutamate + H2O. It catalyses the reaction cadaverine + 2-oxoglutarate = 5-aminopentanal + L-glutamate. It participates in amine and polyamine degradation; putrescine degradation; 4-aminobutanal from putrescine (transaminase route): step 1/1. In terms of biological role, catalyzes the aminotransferase reaction from putrescine to 2-oxoglutarate, leading to glutamate and 4-aminobutanal, which spontaneously cyclizes to form 1-pyrroline. This is the first step in one of two pathways for putrescine degradation, where putrescine is converted into 4-aminobutanoate (gamma-aminobutyrate or GABA) via 4-aminobutanal. Also functions as a cadaverine transaminase in a a L-lysine degradation pathway to succinate that proceeds via cadaverine, glutarate and L-2-hydroxyglutarate. The protein is Putrescine aminotransferase of Pectobacterium atrosepticum (strain SCRI 1043 / ATCC BAA-672) (Erwinia carotovora subsp. atroseptica).